The primary structure comprises 305 residues: Undecaprenyl-diphosphatase (305 aa).

8 consecutive transmembrane segments (helical) span residues 18–38 (GVTE…PALV), 55–75 (YLAF…VFFW), 103–123 (WLIV…EQLF), 130–150 (PVPA…GEVL), 187–207 (GVLI…RSGI), 225–245 (FSFL…IPEL), 246–266 (FGPL…ASFV), and 284–304 (LTPF…WLAL).

Belongs to the UppP family.

The protein localises to the cell membrane. It catalyses the reaction di-trans,octa-cis-undecaprenyl diphosphate + H2O = di-trans,octa-cis-undecaprenyl phosphate + phosphate + H(+). In terms of biological role, catalyzes the dephosphorylation of undecaprenyl diphosphate (UPP). Confers resistance to bacitracin. This is Undecaprenyl-diphosphatase from Mycolicibacterium paratuberculosis (strain ATCC BAA-968 / K-10) (Mycobacterium paratuberculosis).